Here is an 83-residue protein sequence, read N- to C-terminus: Small ribosomal subunit protein bS20 (83 aa).

Residues 1 to 25 are disordered; that stretch reads MPNIKSAIKRVNTTHTAEERNISQK. Over residues 16–25 the composition is skewed to basic and acidic residues; it reads TAEERNISQK.

Belongs to the bacterial ribosomal protein bS20 family.

Its function is as follows. Binds directly to 16S ribosomal RNA. The chain is Small ribosomal subunit protein bS20 from Staphylococcus saprophyticus subsp. saprophyticus (strain ATCC 15305 / DSM 20229 / NCIMB 8711 / NCTC 7292 / S-41).